The following is a 147-amino-acid chain: D-aminoacyl-tRNA deacylase (147 aa).

Residues 137 to 138 carry the Gly-cisPro motif, important for rejection of L-amino acids motif; the sequence is GP.

Belongs to the DTD family. Homodimer.

Its subcellular location is the cytoplasm. The enzyme catalyses glycyl-tRNA(Ala) + H2O = tRNA(Ala) + glycine + H(+). It catalyses the reaction a D-aminoacyl-tRNA + H2O = a tRNA + a D-alpha-amino acid + H(+). Its function is as follows. An aminoacyl-tRNA editing enzyme that deacylates mischarged D-aminoacyl-tRNAs. Also deacylates mischarged glycyl-tRNA(Ala), protecting cells against glycine mischarging by AlaRS. Acts via tRNA-based rather than protein-based catalysis; rejects L-amino acids rather than detecting D-amino acids in the active site. By recycling D-aminoacyl-tRNA to D-amino acids and free tRNA molecules, this enzyme counteracts the toxicity associated with the formation of D-aminoacyl-tRNA entities in vivo and helps enforce protein L-homochirality. Upon expression in B.subtilis strain 168 confers resistance to D-Tyr and D-Asp, suggesting it acts on both of these amino acids. The chain is D-aminoacyl-tRNA deacylase from Bacillus amyloliquefaciens (Bacillus velezensis).